A 648-amino-acid chain; its full sequence is RAF proto-oncogene serine/threonine-protein kinase (648 aa).

Ser29 carries the post-translational modification Phosphoserine; by MAPK1. The residue at position 43 (Ser43) is a Phosphoserine; by PKA and MAPK1. Residues 56–131 (NTIRVFLPNK…IGEELQVDFL (76 aa)) enclose the RBD domain. A Phorbol-ester/DAG-type zinc finger spans residues 138–184 (THNFARKTFLKLAFCDICQKFLLNGFRCQTCGYKFHEHCSTKVPTMC). 8 residues coordinate Zn(2+): His139, Cys152, Cys155, Cys165, Cys168, His173, Cys176, and Cys184. The segment at 220–334 (SVSRMPVSSQ…QEKNKIRPRG (115 aa)) is disordered. The span at 239-271 (TFNTSSPSSEGSLSQRQRSTSTPNVHMVSTTLP) shows a compositional bias: polar residues. Ser252 bears the Phosphoserine mark. Ser259 is modified (phosphoserine; by PKA, PKC and PKB/AKT1). Thr268 is subject to Phosphothreonine; by autocatalysis. Thr269 is subject to Phosphothreonine; by PKA. A compositionally biased stretch (basic and acidic residues) spans 275–285 (RMIEDAIRSHS). The segment covering 286–301 (ESASPSALSSSPNNLS) has biased composition (low complexity). Position 289 is a phosphoserine; by MAPK1 (Ser289). Ser296 carries the post-translational modification Phosphoserine. Ser301 carries the phosphoserine; by MAPK1 modification. The interaction with PEBP1/RKIP stretch occupies residues 331–349 (RPRGQRDSSYYWEIEASEV). Ser338 is modified (phosphoserine; by PAK1, PAK2, PAK3 and PAK5). Ser339 carries the phosphoserine; by PAK1, PAK2 and PAK3 modification. 2 positions are modified to phosphotyrosine; by SRC: Tyr340 and Tyr341. In terms of domain architecture, Protein kinase spans 349–609 (VMLSTRIGSG…PQILSSIELL (261 aa)). ATP contacts are provided by residues 355 to 363 (IGSGSFGTV) and Lys375. Residue Asp468 is the Proton acceptor of the active site. Ser471 carries the post-translational modification Phosphoserine. At Thr491 the chain carries Phosphothreonine. Ser494 carries the phosphoserine modification. Ser499 bears the Phosphoserine; by PKC mark. Arg563 bears the Symmetric dimethylarginine; by PRMT5 mark. Phosphoserine is present on Ser621. The residue at position 642 (Ser642) is a Phosphoserine; by MAPK1.

It belongs to the protein kinase superfamily. TKL Ser/Thr protein kinase family. RAF subfamily. Monomer. Homodimer. Heterodimerizes with BRAF and this heterodimer possesses a highly increased kinase activity compared to the respective homodimers or monomers. Heterodimerization is mitogen-regulated and enhanced by 14-3-3 proteins. MAPK1/ERK2 activation can induce a negative feedback that promotes the dissociation of the heterodimer. Forms a multiprotein complex with Ras (M-Ras/MRAS), SHOC2 and protein phosphatase 1 (PPP1CA, PPP1CB and PPP1CC). Interacts with LZTR1. Interacts with Ras proteins; the interaction is antagonized by RIN1. Weakly interacts with RIT1. Interacts (via N-terminus) with RGS14 (via RBD domains); the interaction mediates the formation of a ternary complex with BRAF, a ternary complex inhibited by GNAI1. Probably forms a complex composed of chaperones HSP90 and HSP70, co-chaperones CDC37, PPP5C, TSC1 and client protein TSC2, CDK4, AKT, RAF1 and NR3C1; this complex does not contain co-chaperones STIP1/HOP and PTGES3/p23. Interacts with STK3/MST2; the interaction inhibits its pro-apoptotic activity. Interacts (when phosphorylated at Ser-259) with YWHAZ (unphosphorylated at 'Thr-232'). Interacts with MAP2K1/MEK1 and MAP2K2/MEK2. Interacts with MAP3K5/ASF1 (via N-terminus) and this interaction inhibits the proapoptotic function of MAP3K5/ASK1. Interacts with PAK1 (via kinase domain). The phosphorylated form interacts with PIN1. The Ser-338 and Ser-339 phosphorylated form (by PAK1) interacts with BCL2. Interacts with PEBP1/RKIP and this interaction is enhanced if RAF1 is phosphorylated on residues Ser-338, Ser-339, Tyr-340 and Tyr-341. Interacts with ADCY2, ADCY5, ADCY6, DGKH, RCAN1/DSCR1, PPP1R12A, PKB/AKT1, PPP2CA, PPP2R1B, SPRY2, SPRY4, CNKSR1/CNK1, KSR2 and PHB/prohibitin. Interacts with ROCK2. In its active form, interacts with PRMT5. Interacts with FAM83B; displaces 14-3-3 proteins from RAF1 and activates RAF1. Interacts with PDE8A; the interaction promotes RAF1 activity. Interacts with MFHAS1. Interacts with GLS. Interacts with NEK10 and MAP2K1; the interaction is direct with NEK10 and required for ERK1/2-signaling pathway activation in response to UV irradiation. Zn(2+) serves as cofactor. Phosphorylation at Thr-269, Ser-338, Tyr-341, Thr-491 and Ser-494 results in its activation. Phosphorylation at Ser-29, Ser-43, Ser-289, Ser-296, Ser-301 and Ser-642 by MAPK1/ERK2 results in its inactivation. Phosphorylation at Ser-259 induces the interaction with YWHAZ and inactivates kinase activity. Dephosphorylation of Ser-259 by the SHOC2-MRAS-PP1c (SMP) complex consisting of SHOC2, GTP-bound M-Ras/MRAS and the catalytic subunit of protein phosphatase 1 (PPP1CA, PPP1CB or PPP1CC); this relieves inactivation and stimulates kinase activity. Phosphorylation at Ser-338 by PAK1 and PAK5 and Ser-339 by PAK1 is required for its mitochondrial localization. Phosphorylation at Ser-621 in response to growth factor treatment stabilizes the protein, possibly by preventing proteasomal degradation. Phosphorylation at Ser-289, Ser-296, Ser-301, Ser-338 and Ser-621 are somehow linked to the methylation potential of cells. Treatment of cells with HGF in the presence of the methylation inhibitor 5'-methylthioadenosine (MTA) results in increased phosphorylation at Ser-338 and Ser-621 and decreased phosphorylation at Ser-296, Ser-301 and Ser-338. Dephosphorylation at Ser-338 by PPP5C results in an activity decrease. In terms of processing, methylated at Arg-563 in response to EGF treatment. This modification leads to destabilization of the protein, possibly through proteasomal degradation. As to expression, in skeletal muscle, isoform 1 is more abundant than isoform 2.

The protein localises to the cytoplasm. The protein resides in the cell membrane. It localises to the mitochondrion. Its subcellular location is the nucleus. The catalysed reaction is L-seryl-[protein] + ATP = O-phospho-L-seryl-[protein] + ADP + H(+). It catalyses the reaction L-threonyl-[protein] + ATP = O-phospho-L-threonyl-[protein] + ADP + H(+). Regulation is a highly complex process involving membrane recruitment, protein-protein interactions, dimerization, and phosphorylation/dephosphorylation events. Ras-GTP recruits RAF1 to the membrane, thereby promoting its activation. The inactive conformation of RAF1 is maintained by autoinhibitory interactions occurring between the N-terminal regulatory and the C-terminal catalytic domains and by the binding of a 14-3-3 protein that contacts two phosphorylation sites, Ser-259 and Ser-621. Upon mitogenic stimulation, Ras and PPP2R1A cooperate to release autoinhibition and the subsequent phosphorylation of activating sites: Ser-338, Tyr-341, Thr-491, and Ser-494, yields a fully active kinase. Through a negative feedback mechanism involving MAPK1/ERK2, RAF1 is phosphorylated on Ser-29, Ser-43, Ser-289, Ser-296, Ser-301 and Ser-642 by MAPK1/ERK2, which yields an inactive, desensitized kinase. The signaling-competent conformation of RAF1 is finally re-established by the coordinated action of PIN1, a prolyl isomerase that converts pSer and pThr residues from the cis to the trans conformation, which is preferentially recognized and dephosphorylated by PPP2R1A. Activated by homodimerization and heterodimerization (with BRAF). Also regulated through association with other proteins such as KSR2, CNKSR1/CNK1, PEBP1/RKIP, PHB/prohibitin and SPRY4. PEBP1/RKIP acts by dissociating RAF1 from its substrates MAP2K1/MEK1 and MAP2K2/MEK2. PHB/prohibitin facilitates the displacement of 14-3-3 from RAF1 by activated Ras, thereby promoting cell membrane localization and phosphorylation of RAF1 at the activating Ser-338. SPRY4 inhibits Ras-independent, but not Ras-dependent, activation of RAF1. CNKSR1/CNK1 regulates Src-mediated RAF1 activation. Serine/threonine-protein kinase that acts as a regulatory link between the membrane-associated Ras GTPases and the MAPK/ERK cascade, and this critical regulatory link functions as a switch determining cell fate decisions including proliferation, differentiation, apoptosis, survival and oncogenic transformation. RAF1 activation initiates a mitogen-activated protein kinase (MAPK) cascade that comprises a sequential phosphorylation of the dual-specific MAPK kinases (MAP2K1/MEK1 and MAP2K2/MEK2) and the extracellular signal-regulated kinases (MAPK3/ERK1 and MAPK1/ERK2). The phosphorylated form of RAF1 (on residues Ser-338 and Ser-339, by PAK1) phosphorylates BAD/Bcl2-antagonist of cell death at 'Ser-75'. Phosphorylates adenylyl cyclases: ADCY2, ADCY5 and ADCY6, resulting in their activation. Phosphorylates PPP1R12A resulting in inhibition of the phosphatase activity. Phosphorylates TNNT2/cardiac muscle troponin T. Can promote NF-kB activation and inhibit signal transducers involved in motility (ROCK2), apoptosis (MAP3K5/ASK1 and STK3/MST2), proliferation and angiogenesis (RB1). Can protect cells from apoptosis also by translocating to the mitochondria where it binds BCL2 and displaces BAD/Bcl2-antagonist of cell death. Regulates Rho signaling and migration, and is required for normal wound healing. Plays a role in the oncogenic transformation of epithelial cells via repression of the TJ protein, occludin (OCLN) by inducing the up-regulation of a transcriptional repressor SNAI2/SLUG, which induces down-regulation of OCLN. Restricts caspase activation in response to selected stimuli, notably Fas stimulation, pathogen-mediated macrophage apoptosis, and erythroid differentiation. The protein is RAF proto-oncogene serine/threonine-protein kinase of Homo sapiens (Human).